The sequence spans 689 residues: Glycine--tRNA ligase beta subunit (689 aa).

Belongs to the class-II aminoacyl-tRNA synthetase family. As to quaternary structure, tetramer of two alpha and two beta subunits.

The protein resides in the cytoplasm. It catalyses the reaction tRNA(Gly) + glycine + ATP = glycyl-tRNA(Gly) + AMP + diphosphate. This Coxiella burnetii (strain Dugway 5J108-111) protein is Glycine--tRNA ligase beta subunit.